Here is a 565-residue protein sequence, read N- to C-terminus: Putative serine protease pcp-1 (565 aa).

The signal sequence occupies residues methionine 1 to alanine 17. N-linked (GlcNAc...) asparagine glycosylation is found at asparagine 69, asparagine 107, and asparagine 126. The active-site Charge relay system is the serine 177. Residues asparagine 240, asparagine 244, asparagine 257, asparagine 271, asparagine 319, and asparagine 347 are each glycosylated (N-linked (GlcNAc...) asparagine). Catalysis depends on charge relay system residues aspartate 451 and histidine 479.

Belongs to the peptidase S28 family.

This Caenorhabditis elegans protein is Putative serine protease pcp-1 (pcp-1).